The following is a 37-amino-acid chain: Large ribosomal subunit protein bL36 (37 aa).

The protein belongs to the bacterial ribosomal protein bL36 family.

In Synechococcus sp. (strain RCC307), this protein is Large ribosomal subunit protein bL36.